The following is an 86-amino-acid chain: Neurotoxin E1x (86 aa).

A signal peptide spans 1–19; it reads MNSLLMITACLVVIGTVWA. The LCN-type CS-alpha/beta domain occupies 20 to 84; the sequence is KEGYLVDVKG…TWPLPNKTCG (65 aa). Disulfide bonds link C30–C83, C34–C59, C43–C64, and C47–C66. C83 carries the cysteine amide modification.

This sequence belongs to the long (4 C-C) scorpion toxin superfamily. Sodium channel inhibitor family. Beta subfamily. As to expression, expressed by the venom gland.

It localises to the secreted. In terms of biological role, binds to sodium channels (Nav) and inhibits the inactivation of the activated channels, thereby blocking neuronal transmission. This is Neurotoxin E1x from Centruroides sculpturatus (Arizona bark scorpion).